A 254-amino-acid polypeptide reads, in one-letter code: Phosphatidylglycerol--prolipoprotein diacylglyceryl transferase (254 aa).

A run of 4 helical transmembrane segments spans residues 11-31, 49-69, 84-104, and 109-129; these read LAIR…LLLA, FLIA…IFEF, QGGL…YIYL, and ESFF…QAIG. R130 is a binding site for a 1,2-diacyl-sn-glycero-3-phospho-(1'-sn-glycerol). 3 helical membrane passes run 169–189, 196–216, and 228–248; these read PTFL…VYLL, GIVF…IEGL, and VAQL…YNII.

This sequence belongs to the Lgt family.

The protein localises to the cell membrane. It carries out the reaction L-cysteinyl-[prolipoprotein] + a 1,2-diacyl-sn-glycero-3-phospho-(1'-sn-glycerol) = an S-1,2-diacyl-sn-glyceryl-L-cysteinyl-[prolipoprotein] + sn-glycerol 1-phosphate + H(+). Its pathway is protein modification; lipoprotein biosynthesis (diacylglyceryl transfer). Catalyzes the transfer of the diacylglyceryl group from phosphatidylglycerol to the sulfhydryl group of the N-terminal cysteine of a prolipoprotein, the first step in the formation of mature lipoproteins. This chain is Phosphatidylglycerol--prolipoprotein diacylglyceryl transferase, found in Clostridium botulinum (strain ATCC 19397 / Type A).